A 40-amino-acid polypeptide reads, in one-letter code: Snaclec LmrLEC-1 (40 aa).

Cys2 and Cys13 are joined by a disulfide.

This sequence belongs to the snaclec family. Dimer (non-covalently linked) of heterodimers of subunits alpha and beta (disulfide-linked). As to expression, expressed by the venom gland.

It localises to the secreted. Its function is as follows. Interferes with one step of hemostasis (modulation of platelet aggregation, or coagulation cascade, for example). This Lachesis muta rhombeata (Bushmaster) protein is Snaclec LmrLEC-1.